The following is a 587-amino-acid chain: Thioredoxin domain-containing protein 3 (587 aa).

The 118-residue stretch at A2–K119 folds into the Thioredoxin domain. The cysteines at positions 39 and 42 are disulfide-linked. NDK regions lie at residues M157–E255, V313–A453, and L454–N587.

The protein in the C-terminal section; belongs to the NDK family. In terms of assembly, monomer. Testis-specific.

It localises to the cytoplasm. In terms of biological role, probably required during the final stages of sperm tail maturation in the testis and/or epididymis, where extensive disulfide bonding of fibrous sheath (FS) proteins occurs. In vitro, it has neither nucleoside diphosphate kinase (NDPK) activity nor reducing activity on disulfide bonds. Exhibits a 3'-5' exonuclease activity with a preference for single-stranded DNA, suggesting roles in DNA proofreading and repair. The chain is Thioredoxin domain-containing protein 3 (Nme8) from Rattus norvegicus (Rat).